The sequence spans 537 residues: Chaperonin GroEL (537 aa).

ATP-binding positions include 29–32 (TLGP), 86–90 (DGTTT), G413, 477–479 (NAA), and D493.

Belongs to the chaperonin (HSP60) family. As to quaternary structure, forms a cylinder of 14 subunits composed of two heptameric rings stacked back-to-back. Interacts with the co-chaperonin GroES.

It localises to the cytoplasm. It catalyses the reaction ATP + H2O + a folded polypeptide = ADP + phosphate + an unfolded polypeptide.. In terms of biological role, together with its co-chaperonin GroES, plays an essential role in assisting protein folding. The GroEL-GroES system forms a nano-cage that allows encapsulation of the non-native substrate proteins and provides a physical environment optimized to promote and accelerate protein folding. The polypeptide is Chaperonin GroEL (Parascardovia denticolens (Bifidobacterium denticolens)).